The sequence spans 240 residues: 4-hydroxy-tetrahydrodipicolinate reductase (240 aa).

7 to 12 (GLSGTM) contacts NAD(+). K35 is an NADP(+) binding site. NAD(+) is bound by residues 74–76 (GTT) and 98–101 (ATNM). The active-site Proton donor/acceptor is the H131. Residue H132 participates in (S)-2,3,4,5-tetrahydrodipicolinate binding. The active-site Proton donor is K135. Residue 141–142 (GS) coordinates (S)-2,3,4,5-tetrahydrodipicolinate.

The protein belongs to the DapB family.

Its subcellular location is the cytoplasm. The enzyme catalyses (S)-2,3,4,5-tetrahydrodipicolinate + NAD(+) + H2O = (2S,4S)-4-hydroxy-2,3,4,5-tetrahydrodipicolinate + NADH + H(+). The catalysed reaction is (S)-2,3,4,5-tetrahydrodipicolinate + NADP(+) + H2O = (2S,4S)-4-hydroxy-2,3,4,5-tetrahydrodipicolinate + NADPH + H(+). It participates in amino-acid biosynthesis; L-lysine biosynthesis via DAP pathway; (S)-tetrahydrodipicolinate from L-aspartate: step 4/4. In terms of biological role, catalyzes the conversion of 4-hydroxy-tetrahydrodipicolinate (HTPA) to tetrahydrodipicolinate. In Alkaliphilus metalliredigens (strain QYMF), this protein is 4-hydroxy-tetrahydrodipicolinate reductase.